A 458-amino-acid polypeptide reads, in one-letter code: Kelch repeat and BTB domain-containing protein 13 (458 aa).

One can recognise a BTB domain in the interval 7–74 (TLVQVWVGGQ…LRGDRPALAA (68 aa)). Kelch repeat units follow at residues 159–209 (AVST…TLGN), 210–258 (KLYI…GFDG), 259–305 (RLYA…QACG), 307–350 (LFVC…VAHR), and 352–400 (SLYV…VVRG).

As to quaternary structure, component of the BCR(KBTBD13) E3 ubiquitin ligase complex, at least composed of CUL3 and KBTBD13 and RBX1. Interacts with CUL3. Post-translationally, autoubiquitinated. As to expression, expressed in skeletal muscle.

It localises to the cytoplasm. Its pathway is protein modification; protein ubiquitination. Substrate-specific adapter of a BCR (BTB-CUL3-RBX1) E3 ubiquitin ligase complex. The polypeptide is Kelch repeat and BTB domain-containing protein 13 (KBTBD13) (Homo sapiens (Human)).